The chain runs to 207 residues: Segregation and condensation protein B (207 aa).

Belongs to the ScpB family. As to quaternary structure, homodimer. Homodimerization may be required to stabilize the binding of ScpA to the Smc head domains. Component of a cohesin-like complex composed of ScpA, ScpB and the Smc homodimer, in which ScpA and ScpB bind to the head domain of Smc. The presence of the three proteins is required for the association of the complex with DNA.

It localises to the cytoplasm. In terms of biological role, participates in chromosomal partition during cell division. May act via the formation of a condensin-like complex containing Smc and ScpA that pull DNA away from mid-cell into both cell halves. This Mycoplasma genitalium (strain ATCC 33530 / DSM 19775 / NCTC 10195 / G37) (Mycoplasmoides genitalium) protein is Segregation and condensation protein B.